Reading from the N-terminus, the 102-residue chain is Urease subunit beta (102 aa).

This sequence belongs to the urease beta subunit family. Heterotrimer of UreA (gamma), UreB (beta) and UreC (alpha) subunits. Three heterotrimers associate to form the active enzyme.

It is found in the cytoplasm. It catalyses the reaction urea + 2 H2O + H(+) = hydrogencarbonate + 2 NH4(+). Its pathway is nitrogen metabolism; urea degradation; CO(2) and NH(3) from urea (urease route): step 1/1. This is Urease subunit beta from Methylobacillus flagellatus (strain ATCC 51484 / DSM 6875 / VKM B-1610 / KT).